Consider the following 104-residue polypeptide: MEKIRLKLKAYDHRVLDRSVVAIVEAVKRSGSEIRGPIPLPTKNKRYTVLRSPHVNKDSREQFEIRFYSRLIDIISATPETVDSLMKLDLAPEVDVEVTSMETK.

Belongs to the universal ribosomal protein uS10 family. Part of the 30S ribosomal subunit.

Functionally, involved in the binding of tRNA to the ribosomes. The polypeptide is Small ribosomal subunit protein uS10 (Helicobacter pylori (strain P12)).